Consider the following 327-residue polypeptide: Tetraacyldisaccharide 4'-kinase (327 aa).

52 to 59 (TLGGAGKT) provides a ligand contact to ATP.

Belongs to the LpxK family.

The enzyme catalyses a lipid A disaccharide + ATP = a lipid IVA + ADP + H(+). It participates in glycolipid biosynthesis; lipid IV(A) biosynthesis; lipid IV(A) from (3R)-3-hydroxytetradecanoyl-[acyl-carrier-protein] and UDP-N-acetyl-alpha-D-glucosamine: step 6/6. In terms of biological role, transfers the gamma-phosphate of ATP to the 4'-position of a tetraacyldisaccharide 1-phosphate intermediate (termed DS-1-P) to form tetraacyldisaccharide 1,4'-bis-phosphate (lipid IVA). This is Tetraacyldisaccharide 4'-kinase from Methylorubrum extorquens (strain PA1) (Methylobacterium extorquens).